We begin with the raw amino-acid sequence, 72 residues long: MAHYFGGKSFYLPAGDKIKEALRDAQIYQEFNGKNVPDLIKKYRLSESTIYAILRNQRTLQRKRHQMDFNFS.

The H-T-H motif DNA-binding region spans 35 to 55 (NVPDLIKKYRLSESTIYAILR).

Belongs to the c/mor transcriptional regulatory family.

Functionally, required for transcription of the phage late genes. This chain is Mu-like prophage FluMu protein C, found in Haemophilus influenzae (strain ATCC 51907 / DSM 11121 / KW20 / Rd).